Consider the following 468-residue polypeptide: POC1 centriolar protein homolog B (468 aa).

WD repeat units follow at residues 16-55, 58-97, 100-139, 142-181, 184-223, 226-265, and 268-307; these read GHKDAVTCVDFSPDSKQLASSSADACVMIWNFKPQSRAYK, GHKEAVTCVQFSPSGHLVASSSKDRTVRLWAPNIKGESTV, AHTAVVRCVNFSSDGQTFITASDDKSIKAWNLHRQRFLFS, QHTNWVRCARFSPDGRLIASCSDDKTVRIWDLTNRLCINT, DYKGHSNYVDFNQMGTCVASAGADSTVKVWDIRMNKLLQH, VHNAGVSSLSFHPSGNYLLTASSDGTLKILDLLEGRLIYT, and GHQGPVLSVTFSKSGDQFASGATDAQVLVWKTNFDKYSVK. Residues 420 to 459 adopt a coiled-coil conformation; sequence NTLEQIVDQLNVLTQTVSILEHRLTLTEDKLKECLENQQK.

This sequence belongs to the WD repeat POC1 family. Interacts with pat. In terms of tissue distribution, highly expressed in ovary and, at low levels, in testis.

The protein localises to the cytoplasm. Its subcellular location is the cytoskeleton. It localises to the microtubule organizing center. The protein resides in the centrosome. It is found in the centriole. In terms of biological role, plays an important role in centriole assembly and/or stability and ciliogenesis. Involved in early steps of centriole duplication, as well as in the later steps of centriole length control. The protein is POC1 centriolar protein homolog B (poc1b) of Xenopus laevis (African clawed frog).